The chain runs to 530 residues: MSGNKISTLQALVFFLYRFFILRRWCHRSPKQKYQKCPSHGLHQYQDLSNHTLIFNVEGALLKSNSLFPYFMVVAFEAGGVIRSLFLLVLYPFISLMSYEMGLKTMVMLSFFGVKKESFRVGKSVLPKYFLEDVGLEMFQVLKRGGKRVAVSDLPQVMIDVFLRDYLEIEVVVGRDMKMVGGYYLGIVEDKKNLEIAFDKVVQEERLGSGRRLIGITSFNSPSHRSLFSQFCQEIYFVRNSDKKSWQTLPQDQYPKPLIFHDGRLAVKPTPLNTLVLFMWAPFAAVLAAARLVFGLNLPYSLANPFLAFSGIHLTLTVNNHNDLISADRKRGCLFVCNHRTLLDPLYISYALRKKNMKAVTYSLSRLSELLAPIKTVRLTRDRVKDGQAMEKLLSQGDLVVCPEGTTCREPYLLRFSPLFSEVCDVIVPVAIDSHVTFFYGTTASGLKAFDPIFFLLNPFPSYTVKLLDPVSGSSSSTCRGVPDNGKVNFEVANHVQHEIGNALGFECTNLTRRDKYLILAGNNGVVKKK.

3 consecutive transmembrane segments (helical) span residues 70–90 (YFMV…LLVL), 93–113 (FISL…SFFG), and 275–295 (LVLF…LVFG). The short motif at 339–344 (HRTLLD) is the HXXXXD motif element.

The protein belongs to the GPAT/DAPAT family. Weakly or not expressed in roots, leaves, seedlings, developing siliques and flower buds.

It localises to the membrane. The catalysed reaction is sn-glycerol 3-phosphate + an acyl-CoA = a 1-acyl-sn-glycero-3-phosphate + CoA. The protein operates within phospholipid metabolism; CDP-diacylglycerol biosynthesis; CDP-diacylglycerol from sn-glycerol 3-phosphate: step 1/3. Functionally, esterifies acyl-group from acyl-ACP to the sn-1 position of glycerol-3-phosphate, an essential step in glycerolipid biosynthesis. The chain is Probable glycerol-3-phosphate acyltransferase 2 (GPAT2) from Arabidopsis thaliana (Mouse-ear cress).